We begin with the raw amino-acid sequence, 404 residues long: Cysteine desulfurase IscS (404 aa).

Residues 75 to 76 (AT), Asn-155, Gln-183, and 203 to 205 (SAH) each bind pyridoxal 5'-phosphate. An N6-(pyridoxal phosphate)lysine modification is found at Lys-206. Residue Thr-243 coordinates pyridoxal 5'-phosphate. Cys-328 (cysteine persulfide intermediate) is an active-site residue. Cys-328 contacts [2Fe-2S] cluster.

This sequence belongs to the class-V pyridoxal-phosphate-dependent aminotransferase family. NifS/IscS subfamily. Homodimer. Forms a heterotetramer with IscU, interacts with other sulfur acceptors. Requires pyridoxal 5'-phosphate as cofactor.

It is found in the cytoplasm. It carries out the reaction (sulfur carrier)-H + L-cysteine = (sulfur carrier)-SH + L-alanine. It functions in the pathway cofactor biosynthesis; iron-sulfur cluster biosynthesis. In terms of biological role, master enzyme that delivers sulfur to a number of partners involved in Fe-S cluster assembly, tRNA modification or cofactor biosynthesis. Catalyzes the removal of elemental sulfur atoms from cysteine to produce alanine. Functions as a sulfur delivery protein for Fe-S cluster synthesis onto IscU, an Fe-S scaffold assembly protein, as well as other S acceptor proteins. This chain is Cysteine desulfurase IscS, found in Pseudomonas fluorescens (strain ATCC BAA-477 / NRRL B-23932 / Pf-5).